The primary structure comprises 62 residues: Large ribosomal subunit protein uL29 (62 aa).

It belongs to the universal ribosomal protein uL29 family.

The sequence is that of Large ribosomal subunit protein uL29 from Desulfosudis oleivorans (strain DSM 6200 / JCM 39069 / Hxd3) (Desulfococcus oleovorans).